Here is a 259-residue protein sequence, read N- to C-terminus: Caffeoyl-CoA O-methyltransferase (259 aa).

Substrate is bound at residue K33. S-adenosyl-L-methionine contacts are provided by residues T75, E97, 99–100 (GV), S105, D123, and A152. D175 serves as a coordination point for substrate. Residue D175 coordinates a divalent metal cation. D177 lines the S-adenosyl-L-methionine pocket. The a divalent metal cation site is built by D201 and N202. Substrate is bound at residue N206.

This sequence belongs to the class I-like SAM-binding methyltransferase superfamily. Cation-dependent O-methyltransferase family. CCoAMT subfamily. The cofactor is a divalent metal cation.

It catalyses the reaction (E)-caffeoyl-CoA + S-adenosyl-L-methionine = (E)-feruloyl-CoA + S-adenosyl-L-homocysteine + H(+). It functions in the pathway aromatic compound metabolism; phenylpropanoid biosynthesis. In terms of biological role, methylates caffeoyl-CoA to feruloyl-CoA and 5-hydroxyferuloyl-CoA to sinapoyl-CoA. Plays a role in the synthesis of feruloylated polysaccharides. Involved in the reinforcement of the plant cell wall. Also involved in the responding to wounding or pathogen challenge by the increased formation of cell wall-bound ferulic acid polymers. The protein is Caffeoyl-CoA O-methyltransferase (CCOAOMT) of Pinus taeda (Loblolly pine).